The following is a 405-amino-acid chain: Phosphoglycerate kinase (405 aa).

Substrate is bound by residues Asp21–Asn23, Arg38, His59–Arg62, Arg116, and Arg156. ATP-binding positions include Glu330 and Gly355 to Thr358.

Belongs to the phosphoglycerate kinase family. As to quaternary structure, monomer.

Its subcellular location is the cytoplasm. It catalyses the reaction (2R)-3-phosphoglycerate + ATP = (2R)-3-phospho-glyceroyl phosphate + ADP. The protein operates within carbohydrate degradation; glycolysis; pyruvate from D-glyceraldehyde 3-phosphate: step 2/5. The protein is Phosphoglycerate kinase of Methanocorpusculum labreanum (strain ATCC 43576 / DSM 4855 / Z).